The sequence spans 363 residues: Spermatogenesis-associated protein 22 (363 aa).

2 stretches are compositionally biased toward polar residues: residues 1–12 (MKRSLNENSARS) and 145–157 (SCPMSSGAQQQKQ). Disordered stretches follow at residues 1–51 (MKRS…DNYD) and 145–169 (SCPMSSGAQQQKQFGIPEPPNLPRN).

Component of a multiprotein complex with MEIOB and RPA2. Interacts with MEIOB. Interacts with the complex BRME1:HSF2BP:BRCA2. As to expression, expressed in testis.

It localises to the chromosome. Meiosis-specific protein required for homologous recombination in meiosis I. This Macaca fascicularis (Crab-eating macaque) protein is Spermatogenesis-associated protein 22 (SPATA22).